Reading from the N-terminus, the 436-residue chain is Phosphoribosylamine--glycine ligase (436 aa).

The region spanning 106-318 (RKLFEDYDIE…LADVCQAIVD (213 aa)) is the ATP-grasp domain. ATP is bound at residue 133–196 (LDDFDRDVVV…EERLIGEEFT (64 aa)). Gln-276, Glu-288, and Asn-290 together coordinate Mg(2+). 3 residues coordinate Mn(2+): Gln-276, Glu-288, and Asn-290.

The protein belongs to the GARS family. Mg(2+) is required as a cofactor. It depends on Mn(2+) as a cofactor.

The enzyme catalyses 5-phospho-beta-D-ribosylamine + glycine + ATP = N(1)-(5-phospho-beta-D-ribosyl)glycinamide + ADP + phosphate + H(+). It participates in purine metabolism; IMP biosynthesis via de novo pathway; N(1)-(5-phospho-D-ribosyl)glycinamide from 5-phospho-alpha-D-ribose 1-diphosphate: step 2/2. This chain is Phosphoribosylamine--glycine ligase, found in Methanobrevibacter smithii (strain ATCC 35061 / DSM 861 / OCM 144 / PS).